The primary structure comprises 361 residues: Aromatic amino acid aminotransferase (361 aa).

The residue at position 221 (Lys221) is an N6-(pyridoxal phosphate)lysine.

The protein belongs to the class-II pyridoxal-phosphate-dependent aminotransferase family. As to quaternary structure, homodimer. Pyridoxal 5'-phosphate serves as cofactor.

It catalyses the reaction an aromatic L-alpha-amino acid + 2-oxoglutarate = an aromatic oxo-acid + L-glutamate. Its function is as follows. Aminotransferase that catalyzes the conversion of aromatic amino acids and 2-oxoglutarate into corresponding aromatic oxo acids and L-glutamate. This Mycobacterium marinum (strain ATCC BAA-535 / M) protein is Aromatic amino acid aminotransferase.